A 642-amino-acid polypeptide reads, in one-letter code: MIHKRMNSTELERTSKKIDDYDSSDEEDLRNTIGNIPISWYDDFSHVGYDKDGNQIESAKKNDDMEEFLDRMDDSNYWRRVYDRQSGGFVTLNDEEVKKLNALDASKYPLVGYNPYQPFLDIFSSQTEIHPISNRPDSKRSFIPSLDEKRLVGKMVHAIKMGWVRPSRPKQIEKRVYDLWADNPCSEKTKTELARIRMHFPAPKVPLPGHAESYNPPAEYLCDEEELKKWEETDPEDRRLDFIPKKYDCLRKVPAYDRFYNDRYQRCLDLYLAPRQRKMKLNIDHTELLPELPNLTDMRPFPTTQSFLMLGHSGQVRSLSFEPESTEIFASGGEDGTLRLWSICDGRCLKTTSLDGSITSVAYCPLAKWTLLAVTMESNKMILTNSYCGDRHRITTTTEYLSKLRCESSESDVLKWKYEGKGTLSVDLGYIARQVVWHHKGDYFATFANSKSPKLIYIHQLSKCKSQRPFSRLKGLMTVLSFHPSEPFLFVGTQRYIRIYDLAKCQLKKKIITGSQWMSCMHVDFRGDNVFVGGHDRVFSWIDLQLSSKPWKSVKHHTAAIRGVTQHARCPLIATVSDDSTAIVYYARISSDSLKENEFVPVRRLRTQTAQKNGLSILAAIFHPSQPWLITAHVDGSIALFT.

The tract at residues 1 to 28 (MIHKRMNSTELERTSKKIDDYDSSDEED) is disordered. Basic and acidic residues predominate over residues 10-20 (ELERTSKKIDD). WD repeat units lie at residues 311-351 (GHSG…CLKT), 353-393 (SLDG…DRHR), 472-510 (RLKGLMTVLSFHPSEPFLFVGTQRYIRIYDLAKCQLKKK), 513-552 (TGSQWMSCMHVDFRGDNVFVGGHDRVFSWIDLQLSSKPWK), 556-595 (HHTAAIRGVTQHARCPLIATVSDDSTAIVYYARISSDSLK), and 612-642 (KNGLSILAAIFHPSQPWLITAHVDGSIALFT).

The protein belongs to the WD repeat BOP1/ERB1 family.

It localises to the nucleus. The protein resides in the nucleolus. It is found in the nucleoplasm. Required for maturation of ribosomal RNAs and formation of the large ribosomal subunit. This is Ribosome biogenesis protein BOP1 homolog from Brugia malayi (Filarial nematode worm).